Consider the following 414-residue polypeptide: MVGDIATRWKELSGSSKWKDLLDPLDLDLRRYILHYGDMAEVGYLAFNSDRRSKYVGDSCYTKEELFARTGYLKANPFRYEVTKYIYGTSSIRLPECFIIKSLSREAWNKESNWLGYIAVATDEGKKLLGRRGIVVAWRGTIQLYEWANDFDFPLESAVMVFPGANPNDEPRVANGWLSLYTSTDPRSRFDKTSAQEQVQEELKRLLELYKNEDVTITLTGHSLGAVMSILSAADFLHNEWPKITPSLQHSLCVTVFAFGSPQIGDRSFKRLVESLEHLHILRVTNVPDLIPRYPVFRFTDIGEELQINTLKSEYLKRSLNLGHFHNLEAYLHGVAGTQHNQGEFKLEINRDIALVNKGLDALEDKYLVPGHWWVLENKGMVQSDDGTWKLNGDRSKKKQEEEDEKEENNCKFP.

A Glycyl lysine isopeptide (Lys-Gly) (interchain with G-Cter in ubiquitin) cross-link involves residue lysine 19. Residues 191–217 (DKTSAQEQVQEELKRLLELYKNEDVTI) adopt a coiled-coil conformation. Catalysis depends on serine 223, which acts as the Acyl-ester intermediate. Residues serine 223, aspartate 289, and histidine 326 each act as charge relay system in the active site. The disordered stretch occupies residues 386-414 (DGTWKLNGDRSKKKQEEEDEKEENNCKFP). Residues 390 to 410 (KLNGDRSKKKQEEEDEKEENN) adopt a coiled-coil conformation. Residues 392–401 (NGDRSKKKQE) show a composition bias toward basic and acidic residues.

The protein belongs to the AB hydrolase superfamily. Lipase family.

It localises to the cytoplasm. In terms of biological role, acylhydrolase that catalyzes the hydrolysis of phospholipids at the sn-1 position. The sequence is that of Phospholipase A1-IIbeta from Arabidopsis thaliana (Mouse-ear cress).